Consider the following 175-residue polypeptide: Glucagon family neuropeptides (175 aa).

Residues 1 to 23 (MSGNVYKTLLTLLVYGLIMHCNV) form the signal peptide. A propeptide spanning residues 24–80 (YCSPDRWTPVPGAKLEEEVYDEDGNTLQDFALRAGAPGGGGPRPRWGRCTALYYPPG) is cleaved from the precursor. The segment at 149–157 (VKKYLAAVL) is important for receptor binding. The residue at position 157 (Leu157) is a Leucine amide. Lysine amide is present on Lys168. Residues 172–175 (VAYL) constitute a propeptide that is removed on maturation.

It belongs to the glucagon family.

The protein resides in the secreted. Its function is as follows. Primary role of GRF is to release GH from the pituitary. PACAP is a neuropeptide involved in diverse array of physiological processes through activating the PACAP subfamily of class B1 G protein-coupled receptors: VIP receptor 1 (VIPR1), VIP receptor 2 (VIPR2), and PACAP type I receptor (ADCYAP1R1). Exerts neuroprotective and general cytoprotective effects due to anti-apoptotic, anti-inflammatory, and antioxidant actions. Promotes neuron projection development through the RAPGEF2/Rap1/B-Raf/ERK pathway. In chromaffin cells, induces long-lasting increase of intracellular calcium concentrations and neuroendocrine secretion. Involved in the control of glucose homeostasis, induces insulin secretion by pancreatic beta cells. PACAP exists in two bioactive forms from proteolysis of the same precursor protein, PACAP27 and PACAP38, which differ by eleven amino acid residues in the C-terminus. In Gallus gallus (Chicken), this protein is Glucagon family neuropeptides (ADCYAP1).